Consider the following 266-residue polypeptide: 22 kDa alpha-zein 8 (266 aa).

Residues 1–21 (MATKILALLALLALFVSATNA) form the signal peptide.

It belongs to the zein family.

Zeins are major seed storage proteins. The polypeptide is 22 kDa alpha-zein 8 (Zea mays (Maize)).